The following is a 286-amino-acid chain: Energy-coupling factor transporter ATP-binding protein EcfA2 (286 aa).

The ABC transporter domain occupies 3-244; the sequence is IKVENVSFIY…AERLEKIGLS (242 aa). 40-47 lines the ATP pocket; that stretch reads GHTGSGKS.

This sequence belongs to the ABC transporter superfamily. Energy-coupling factor EcfA family. In terms of assembly, forms a stable energy-coupling factor (ECF) transporter complex composed of 2 membrane-embedded substrate-binding proteins (S component), 2 ATP-binding proteins (A component) and 2 transmembrane proteins (T component).

It localises to the cell membrane. In terms of biological role, ATP-binding (A) component of a common energy-coupling factor (ECF) ABC-transporter complex. Unlike classic ABC transporters this ECF transporter provides the energy necessary to transport a number of different substrates. This is Energy-coupling factor transporter ATP-binding protein EcfA2 from Caldanaerobacter subterraneus subsp. tengcongensis (strain DSM 15242 / JCM 11007 / NBRC 100824 / MB4) (Thermoanaerobacter tengcongensis).